The chain runs to 446 residues: Adenylosuccinate synthetase (446 aa).

GTP contacts are provided by residues 20 to 26 (GDEGKGK) and 48 to 50 (GHT). The active-site Proton acceptor is the aspartate 21. Residues aspartate 21 and glycine 48 each contribute to the Mg(2+) site. Residues 21–24 (DEGK), 46–49 (NAGH), threonine 137, arginine 151, glutamine 232, threonine 247, and arginine 319 each bind IMP. Residue histidine 49 is the Proton donor of the active site. 315–321 (SVTGRPR) serves as a coordination point for substrate. Residues arginine 321, 347–349 (KLD), and 429–431 (STG) each bind GTP.

Belongs to the adenylosuccinate synthetase family. As to quaternary structure, homodimer. Mg(2+) is required as a cofactor.

The protein localises to the cytoplasm. The enzyme catalyses IMP + L-aspartate + GTP = N(6)-(1,2-dicarboxyethyl)-AMP + GDP + phosphate + 2 H(+). It functions in the pathway purine metabolism; AMP biosynthesis via de novo pathway; AMP from IMP: step 1/2. Its function is as follows. Plays an important role in the de novo pathway of purine nucleotide biosynthesis. Catalyzes the first committed step in the biosynthesis of AMP from IMP. The protein is Adenylosuccinate synthetase of Ralstonia pickettii (strain 12J).